The sequence spans 347 residues: Palmitoyltransferase ZDHHC19 (347 aa).

Transmembrane regions (helical) follow at residues 29–49 (VFAAFNVTLLLFLSGLFFGFP) and 59–79 (WAFPAITGPLFILTFFSLVSL). The DHHC domain occupies 112 to 162 (EWCPKCLFHRPPRTYHCPWCNICVEDFDHHCKWVNNCIGHRNFRLFMLLVL). Cys142 acts as the S-palmitoyl cysteine intermediate in catalysis. A run of 2 helical transmembrane segments spans residues 156–176 (LFMLLVLSLCLYSGALLVTCL) and 194–214 (AILVAVPAAGFLIPLFLLLLI). The interval 275 to 347 (IQEKTKPSPP…PTAEPAAGDP (73 aa)) is disordered.

It belongs to the DHHC palmitoyltransferase family.

Its subcellular location is the golgi apparatus membrane. The protein resides in the cytoplasm. The protein localises to the perinuclear region. It catalyses the reaction L-cysteinyl-[protein] + hexadecanoyl-CoA = S-hexadecanoyl-L-cysteinyl-[protein] + CoA. Functionally, palmitoyltransferase that mediates palmitoylation oproteins, such as RRAS and SQSTM1. Catalyzes palmitoylation of RRAS, leading to increased cell viability. Acts as a positive regulator of autophagy by mediating palmitoylation of SQSTM1, promoting affinity between SQSTM1 and ATG8 proteins and recruitment of ubiquitinated cargo proteins to autophagosomes. The sequence is that of Palmitoyltransferase ZDHHC19 (Zdhhc19) from Mus musculus (Mouse).